Reading from the N-terminus, the 30-residue chain is Thrombin-like enzyme LmrSP-2 (30 aa).

The protein belongs to the peptidase S1 family. Snake venom subfamily. In terms of tissue distribution, expressed by the venom gland.

The protein localises to the secreted. Functionally, thrombin-like snake venom serine protease that cleaves alpha-chain of fibrinogen (FGA) releases only fibrinopeptide A. Shows coagulant, esterase and amidase activities. In Lachesis muta rhombeata (Bushmaster), this protein is Thrombin-like enzyme LmrSP-2.